An 83-amino-acid polypeptide reads, in one-letter code: Protein YciN (83 aa).

This is Protein YciN (yciN) from Escherichia coli O157:H7.